The chain runs to 398 residues: Acetate kinase (398 aa).

Asn-8 is a Mg(2+) binding site. Lys-15 is an ATP binding site. Residue Arg-89 participates in substrate binding. Asp-146 acts as the Proton donor/acceptor in catalysis. Residues 206-210 (HIGNG), 283-285 (DMR), and 331-335 (GMGEN) each bind ATP. Glu-383 serves as a coordination point for Mg(2+).

It belongs to the acetokinase family. As to quaternary structure, homodimer. Mg(2+) is required as a cofactor. The cofactor is Mn(2+).

It localises to the cytoplasm. It catalyses the reaction acetate + ATP = acetyl phosphate + ADP. It participates in metabolic intermediate biosynthesis; acetyl-CoA biosynthesis; acetyl-CoA from acetate: step 1/2. Functionally, catalyzes the formation of acetyl phosphate from acetate and ATP. Can also catalyze the reverse reaction. The protein is Acetate kinase of Streptococcus pyogenes serotype M4 (strain MGAS10750).